A 948-amino-acid polypeptide reads, in one-letter code: Protocadherin alpha-2 (948 aa).

An N-terminal signal peptide occupies residues 1 to 22 (MASSIRRGLGAWTRLLSLLLLA). Residues 23–697 (AWEVGSGQLR…GSEATLVDVN (675 aa)) lie on the Extracellular side of the membrane. Cadherin domains lie at 30–133 (QLRY…PPVF), 157–242 (ASDA…EPTF), 243–350 (AQSV…TPEV), 351–455 (SITS…APAF), 456–565 (AQPE…APAL), and 588–678 (GHVV…APKA). N-linked (GlcNAc...) asparagine glycosylation is found at Asn-257, Asn-265, Asn-362, and Asn-548. A helical transmembrane segment spans residues 698–718 (VYLIIAICAVSSLLVLTVLLY). The Cytoplasmic portion of the chain corresponds to 719-948 (TALRCSVPAT…GNSTTDNSDQ (230 aa)). A PXXP 1 repeat occupies 734-737 (PGKP). The segment at 734 to 892 (PGKPTLVCSS…PDKFIIPGSP (159 aa)) is 5 X 4 AA repeats of P-X-X-P. 3 disordered regions span residues 755 to 801 (RQRV…RQPN), 829 to 854 (GPGG…EVSP), and 868 to 948 (KYGP…NSDQ). Basic and acidic residues predominate over residues 783–795 (AEEKQLSESEYVG). 4 PXXP repeats span residues 797-800 (PRQP), 830-833 (PGGP), 871-874 (PGNP), and 889-892 (PGSP). The span at 907-921 (DKSDFITFGKKEETK) shows a compositional bias: basic and acidic residues.

Its subcellular location is the cell membrane. In terms of biological role, potential calcium-dependent cell-adhesion protein. May be involved in the establishment and maintenance of specific neuronal connections in the brain. This is Protocadherin alpha-2 (PCDHA2) from Pan troglodytes (Chimpanzee).